Consider the following 538-residue polypeptide: Bifunctional purine biosynthesis protein PurH (538 aa).

The MGS-like domain occupies 8 to 158; the sequence is IPAPDKVEIK…KNHAYVTILT (151 aa).

The protein belongs to the PurH family.

The enzyme catalyses (6R)-10-formyltetrahydrofolate + 5-amino-1-(5-phospho-beta-D-ribosyl)imidazole-4-carboxamide = 5-formamido-1-(5-phospho-D-ribosyl)imidazole-4-carboxamide + (6S)-5,6,7,8-tetrahydrofolate. It carries out the reaction IMP + H2O = 5-formamido-1-(5-phospho-D-ribosyl)imidazole-4-carboxamide. Its pathway is purine metabolism; IMP biosynthesis via de novo pathway; 5-formamido-1-(5-phospho-D-ribosyl)imidazole-4-carboxamide from 5-amino-1-(5-phospho-D-ribosyl)imidazole-4-carboxamide (10-formyl THF route): step 1/1. The protein operates within purine metabolism; IMP biosynthesis via de novo pathway; IMP from 5-formamido-1-(5-phospho-D-ribosyl)imidazole-4-carboxamide: step 1/1. This Rhizobium leguminosarum bv. trifolii (strain WSM2304) protein is Bifunctional purine biosynthesis protein PurH.